The primary structure comprises 493 residues: Transcript termination protein A18 (493 aa).

The region spanning 100–256 is the Helicase ATP-binding domain; it reads MIESKRPLYI…NSIINIAKLS (157 aa). 113–120 contacts ATP; the sequence is LACGFGKT. The DESH box signature appears at 206 to 209; that stretch reads DESH.

It belongs to the helicase family. Poxviruses subfamily. In terms of assembly, interacts with G2. Might be part of a transcription complex composed at least of G2, A18, and H5.

The protein resides in the virion. Functionally, DNA helicase which seems to act as a postreplicative transcription termination factor. Involved in ATP-dependent release of nascent RNA. Forms a stable complex with single-stranded DNA, and to a lesser extent RNA. This Rabbitpox virus (strain Utrecht) (RPV) protein is Transcript termination protein A18.